Reading from the N-terminus, the 104-residue chain is Large ribosomal subunit protein bL21 (104 aa).

The protein belongs to the bacterial ribosomal protein bL21 family. Part of the 50S ribosomal subunit. Contacts protein L20.

This protein binds to 23S rRNA in the presence of protein L20. This Helicobacter hepaticus (strain ATCC 51449 / 3B1) protein is Large ribosomal subunit protein bL21.